Reading from the N-terminus, the 136-residue chain is Keratin-associated protein 9-3 (136 aa).

11 repeat units span residues 3–7 (CCATS), 21–25 (CCQPT), 31–35 (CCQPS), 36–40 (CCEAS), 41–45 (CCQPS), 46–50 (CCETG), 87–91 (CCVVS), 97–101 (CCQLH), 107–111 (CCRPS), 117–121 (CCRPA), and 126–130 (CCQPS). The tract at residues 21-130 (CCQPTCTQSS…ACCCYCCQPS (110 aa)) is 11 X 5 AA repeats of C-C-[AEQVR]-[ALPTV]-[AGHST].

Belongs to the KRTAP type 9 family. As to quaternary structure, interacts with hair keratins.

In the hair cortex, hair keratin intermediate filaments are embedded in an interfilamentous matrix, consisting of hair keratin-associated proteins (KRTAP), which are essential for the formation of a rigid and resistant hair shaft through their extensive disulfide bond cross-linking with abundant cysteine residues of hair keratins. The matrix proteins include the high-sulfur and high-glycine-tyrosine keratins. The chain is Keratin-associated protein 9-3 from Mus musculus (Mouse).